The primary structure comprises 833 residues: Leucine--tRNA ligase (833 aa).

The 'HIGH' region signature appears at 41-52 (PYPSGAGLHVGH). Positions 610–614 (KMSKS) match the 'KMSKS' region motif. Residue Lys613 coordinates ATP.

This sequence belongs to the class-I aminoacyl-tRNA synthetase family.

The protein localises to the cytoplasm. The enzyme catalyses tRNA(Leu) + L-leucine + ATP = L-leucyl-tRNA(Leu) + AMP + diphosphate. This chain is Leucine--tRNA ligase, found in Streptococcus pyogenes serotype M1.